The chain runs to 314 residues: N-acyl-aromatic-L-amino acid amidohydrolase (carboxylate-forming) B (314 aa).

Residues His19 and Glu22 each coordinate Zn(2+). Residues Arg63 and 70–71 each bind substrate; that span reads NR. His116 serves as a coordination point for Zn(2+). 2 residues coordinate substrate: Glu178 and Tyr289.

This sequence belongs to the AspA/AstE family. Aspartoacylase subfamily. As to quaternary structure, homotetramer. It depends on Zn(2+) as a cofactor.

The protein localises to the apical cell membrane. It is found in the cytoplasm. The catalysed reaction is an N-acyl-aromatic L-alpha-amino acid + H2O = an aromatic L-alpha-amino acid + a carboxylate. The enzyme catalyses an N-acetyl-L-cysteine-S-conjugate + H2O = an S-substituted L-cysteine + acetate. Its function is as follows. Plays an important role in deacetylating mercapturic acids in kidney proximal tubules. In Danio rerio (Zebrafish), this protein is N-acyl-aromatic-L-amino acid amidohydrolase (carboxylate-forming) B (acy3.2).